The primary structure comprises 447 residues: MTIYHFVGIKGSGMSALAQILHDKGFQVQGSDVDKYFFTQKALEEKQIPIMTFSADNIQEGLTIIAGNAFPDTHEEIERALELGLSVIRYHKFLGQLIDGYTSIAITGSHGKTSTTGLLSHVVGAIRPTSYLIGDGTGSGTKDAEYFALEACEYQRHFLAYKPTYAIMTNIDWDHPDYFKSVDDVFNAFETLGKQVKKAVFALGDDAELRKLTLDIPIIYFGFGEENEFQAKNVIKETTGTKFDVYHREEFLSSFEIPAYGDHNVLNALSVIALCDYEGLPVEDVKNELKTFEGVKRRFSITEKGNQVLVDDYAHHPSEIRATVNAARQKYPDKKVVAVFQPHTFTRTRTFLQGFADSLNLADEVYLCDIFGSAREKTGNLTIADLAHKTKGNHIIKEEHTEELLKYPEAVILFMGAGDVQKFQAAYEKVLDHEFLTEADLKKSAIN.

108–114 (GSHGKTS) is a binding site for ATP.

The protein belongs to the MurCDEF family.

Its subcellular location is the cytoplasm. It catalyses the reaction UDP-N-acetyl-alpha-D-muramate + L-alanine + ATP = UDP-N-acetyl-alpha-D-muramoyl-L-alanine + ADP + phosphate + H(+). It participates in cell wall biogenesis; peptidoglycan biosynthesis. Its function is as follows. Cell wall formation. The polypeptide is UDP-N-acetylmuramate--L-alanine ligase (Listeria monocytogenes serovar 1/2a (strain ATCC BAA-679 / EGD-e)).